A 426-amino-acid chain; its full sequence is Histidine--tRNA ligase (426 aa).

It belongs to the class-II aminoacyl-tRNA synthetase family. As to quaternary structure, homodimer.

The protein localises to the cytoplasm. It carries out the reaction tRNA(His) + L-histidine + ATP = L-histidyl-tRNA(His) + AMP + diphosphate + H(+). This chain is Histidine--tRNA ligase, found in Shewanella baltica (strain OS223).